The following is a 631-amino-acid chain: uncharacterized protein (631 aa).

An N-terminal signal peptide occupies residues 1–20; that stretch reads MVRFVSILSLFGCAATLVTA. The Lumenal segment spans residues 21-105; that stretch reads HDDMDMDMDM…AGNRSALRYH (85 aa). 2 N-linked (GlcNAc...) asparagine glycosylation sites follow: asparagine 87 and asparagine 98. The chain crosses the membrane as a helical span at residues 106 to 126; the sequence is IITLLLVAFVLYPVSLALSAA. Topologically, residues 127–131 are cytoplasmic; the sequence is RSRWY. A helical transmembrane segment spans residues 132-152; sequence LPLLFVNLCICISSVMALSVF. Topologically, residues 153–170 are lumenal; it reads KNTFPEEDWYAHNIYGTT. A helical transmembrane segment spans residues 171–191; it reads SVLLLVFMLVHFFAAVLSVPV. Residues 192–322 lie on the Cytoplasmic side of the membrane; that stretch reads SLASKKEYRP…LSCVANVVFH (131 aa). A disordered region spans residues 216–274; it reads MVNSARGSPSPSSNRDTLFSLSSDTTTATATNNNKRRRAEGEDEGDNTSNHDTLRDEDY. Phosphoserine is present on serine 219. Polar residues predominate over residues 220-239; the sequence is ARGSPSPSSNRDTLFSLSSD. Lysine 250 is covalently cross-linked (Glycyl lysine isopeptide (Lys-Gly) (interchain with G-Cter in ubiquitin)). A helical membrane pass occupies residues 323-343; that stretch reads MLTYPLFMYIFVDLIIGFAVG. At 344–351 the chain is on the lumenal side; it reads NLLGKGIR. Residues 352–372 form a helical membrane-spanning segment; sequence IFNLLAHWIKGGVFFTLGVVS. Over 373 to 407 the chain is Cytoplasmic; it reads LARYCGFAAKYGWAWNNISFTSQLTQTRSSNLLFR. A helical membrane pass occupies residues 408–428; the sequence is FAPAGTFTMEFVESFLIFFYG. The Lumenal segment spans residues 429-451; that stretch reads STNIFLEHLAGNGGAWTAKDLQH. A helical membrane pass occupies residues 452–472; the sequence is VSIAFMFIGTGLCGLLTEYKL. Residues 473 to 529 lie on the Cytoplasmic side of the membrane; the sequence is NHWRFEHARKRPQTDVVAATPGYSPNPFPAFTIFWTGILMSQHAQSSQFSTTIHTQW. A helical membrane pass occupies residues 530–550; that stretch reads GYLLSYGSFFRLLTFLILFLV. The Lumenal segment spans residues 551–598; that stretch reads PNTNSAASKPFTELITSFCLLCGGLVFMESTDQSIEAMEYRGFTPMFT. A helical membrane pass occupies residues 599–619; that stretch reads FNLSVGFVSLLMAWEMILFIW. At 620–631 the chain is on the cytoplasmic side; that stretch reads KDWLIKTRKTSL.

This sequence to S.pombe SpBC3B8.06.

The protein resides in the membrane. This is an uncharacterized protein from Saccharomyces cerevisiae (strain ATCC 204508 / S288c) (Baker's yeast).